We begin with the raw amino-acid sequence, 255 residues long: Bouquet formation protein 3 (255 aa).

8 helical membrane passes run 13–33 (IKVSIYLFLHTLTYGLLNYHL), 48–68 (IPYWMSYLSIIMHVGQSLLLQ), 72–94 (LGYGWLLLTKYPVYVLLSTYYLT), 99–116 (IAWAFIIDAISLLVARCF), 132–152 (YSVSFLFTIMASVLISVLNYI), 172–192 (SLVAPPLPLQYLAHVPIGYVI), 205–225 (SLFLMIFLTLWNCFIPYSILF), and 235–255 (VVGAYLSQIWIITFICWALSL).

The protein resides in the endoplasmic reticulum membrane. It localises to the nucleus inner membrane. In terms of biological role, connects telomeres to the nuclear envelop (NE) during both vegetative growth and meiosis. This connection ensures clustering of telomeres to the spindle pole body (SPB) when cells enter meiotic prophase. This Schizosaccharomyces pombe (strain 972 / ATCC 24843) (Fission yeast) protein is Bouquet formation protein 3 (bqt3).